The primary structure comprises 1052 residues: ATP-dependent DNA helicase MPH1 (1052 aa).

The Helicase ATP-binding domain maps to 89–256 (IVRKGLLQNI…EVVNNLNISK (168 aa)). 102–109 (IPTGMGKT) lines the ATP pocket. The DEAH box signature appears at 204–207 (DEAH). Residues 432–649 (ELTQFFYENP…HLVQYRKSDR (218 aa)) form the Helicase C-terminal domain. Disordered regions lie at residues 495–550 (HGPK…NQKQ), 798–832 (IGDTRNKAKASSSMKVKKEPTMAVDHSDDEEDLPL), 869–898 (SKRQRLQPEVQPEVQPEVQPEVQPEVQPEV), and 1002–1052 (HTVS…DSDF). The segment covering 503 to 532 (SDREKRLEEERRMDEEKKQAALQEKLERTS) has biased composition (basic and acidic residues). A compositionally biased stretch (polar residues) spans 534-549 (RTGSSEEAQLSGMNQK). 2 stretches are compositionally biased toward low complexity: residues 875 to 898 (QPEVQPEVQPEVQPEVQPEVQPEV) and 1005 to 1028 (SQSQGQSNSQSQAHSTSQKSQQAS). Over residues 1029–1040 (QKDRSSQDKDLT) the composition is skewed to basic and acidic residues. Over residues 1043-1052 (ELEDLLDSDF) the composition is skewed to acidic residues.

It belongs to the DEAD box helicase family. DEAH subfamily. FANCM sub-subfamily. Interacts with the MHF histone-fold complex to form the FANCM-MHF complex.

It is found in the nucleus. The enzyme catalyses ATP + H2O = ADP + phosphate + H(+). Functionally, ATP-dependent DNA helicase involved in DNA damage repair by homologous recombination and in genome maintenance. Capable of unwinding D-loops. Plays a role in limiting crossover recombinants during mitotic DNA double-strand break (DSB) repair. Component of a FANCM-MHF complex which promotes gene conversion at blocked replication forks, probably by reversal of the stalled fork. The polypeptide is ATP-dependent DNA helicase MPH1 (Candida glabrata (strain ATCC 2001 / BCRC 20586 / JCM 3761 / NBRC 0622 / NRRL Y-65 / CBS 138) (Yeast)).